Here is a 120-residue protein sequence, read N- to C-terminus: Small ribosomal subunit protein bS16 (120 aa).

A disordered region spans residues 81 to 120; it reads GLAKRPARNNPQKAEPGEKAKERAAKRAEKAAAPAEDAAA. Positions 95 to 110 are enriched in basic and acidic residues; it reads EPGEKAKERAAKRAEK. Residues 111–120 show a composition bias toward low complexity; it reads AAAPAEDAAA.

It belongs to the bacterial ribosomal protein bS16 family.

In Methylobacterium radiotolerans (strain ATCC 27329 / DSM 1819 / JCM 2831 / NBRC 15690 / NCIMB 10815 / 0-1), this protein is Small ribosomal subunit protein bS16.